A 345-amino-acid chain; its full sequence is 3-isopropylmalate dehydrogenase (345 aa).

Residues R94, R104, R130, and D215 each coordinate substrate. Mg(2+) contacts are provided by D215, D239, and D243. Residue G273–N285 participates in NAD(+) binding.

This sequence belongs to the isocitrate and isopropylmalate dehydrogenases family. LeuB type 1 subfamily. Homodimer. Mg(2+) serves as cofactor. Mn(2+) is required as a cofactor.

The protein localises to the cytoplasm. The catalysed reaction is (2R,3S)-3-isopropylmalate + NAD(+) = 4-methyl-2-oxopentanoate + CO2 + NADH. The protein operates within amino-acid biosynthesis; L-leucine biosynthesis; L-leucine from 3-methyl-2-oxobutanoate: step 3/4. Functionally, catalyzes the oxidation of 3-carboxy-2-hydroxy-4-methylpentanoate (3-isopropylmalate) to 3-carboxy-4-methyl-2-oxopentanoate. The product decarboxylates to 4-methyl-2 oxopentanoate. The chain is 3-isopropylmalate dehydrogenase (leuB) from Lactococcus lactis subsp. lactis (strain IL1403) (Streptococcus lactis).